The sequence spans 151 residues: ATP synthase subunit b' (151 aa).

The helical transmembrane segment at 18–38 (TLPLMALQVVLLTFILNALFF) threads the bilayer.

Belongs to the ATPase B chain family. As to quaternary structure, F-type ATPases have 2 components, F(1) - the catalytic core - and F(0) - the membrane proton channel. F(1) has five subunits: alpha(3), beta(3), gamma(1), delta(1), epsilon(1). F(0) has four main subunits: a(1), b(1), b'(1) and c(10-14). The alpha and beta chains form an alternating ring which encloses part of the gamma chain. F(1) is attached to F(0) by a central stalk formed by the gamma and epsilon chains, while a peripheral stalk is formed by the delta, b and b' chains.

The protein localises to the cellular thylakoid membrane. F(1)F(0) ATP synthase produces ATP from ADP in the presence of a proton or sodium gradient. F-type ATPases consist of two structural domains, F(1) containing the extramembraneous catalytic core and F(0) containing the membrane proton channel, linked together by a central stalk and a peripheral stalk. During catalysis, ATP synthesis in the catalytic domain of F(1) is coupled via a rotary mechanism of the central stalk subunits to proton translocation. In terms of biological role, component of the F(0) channel, it forms part of the peripheral stalk, linking F(1) to F(0). The b'-subunit is a diverged and duplicated form of b found in plants and photosynthetic bacteria. The sequence is that of ATP synthase subunit b' from Prochlorococcus marinus (strain MIT 9303).